Here is a 221-residue protein sequence, read N- to C-terminus: Adenylate kinase (221 aa).

Position 10-15 (10-15 (GAGKGT)) interacts with ATP. The segment at 30 to 59 (STGDMLRAAVKAGTPLGIEAKKVMDAGGLV) is NMP. AMP is bound by residues Thr31, Arg36, 57 to 59 (GLV), 85 to 88 (GFPR), and Gln92. The interval 122 to 159 (GRRVHVASGRTYHVKFNPPKADMVDDETGEALIQRDDD) is LID. Residues Arg123 and 132 to 133 (TY) each bind ATP. Residues Arg156 and Arg167 each contribute to the AMP site. Gly207 is a binding site for ATP.

Belongs to the adenylate kinase family. In terms of assembly, monomer.

The protein resides in the cytoplasm. The enzyme catalyses AMP + ATP = 2 ADP. It participates in purine metabolism; AMP biosynthesis via salvage pathway; AMP from ADP: step 1/1. Its function is as follows. Catalyzes the reversible transfer of the terminal phosphate group between ATP and AMP. Plays an important role in cellular energy homeostasis and in adenine nucleotide metabolism. This Cupriavidus metallidurans (strain ATCC 43123 / DSM 2839 / NBRC 102507 / CH34) (Ralstonia metallidurans) protein is Adenylate kinase.